The primary structure comprises 491 residues: Protein nucleotidyltransferase YdiU (491 aa).

ATP is bound by residues glycine 94, glycine 96, arginine 97, lysine 117, aspartate 129, glycine 130, arginine 180, and arginine 187. Aspartate 256 serves as the catalytic Proton acceptor. Mg(2+) is bound by residues asparagine 257 and aspartate 266. An ATP-binding site is contributed by aspartate 266.

This sequence belongs to the SELO family. It depends on Mg(2+) as a cofactor. Mn(2+) is required as a cofactor.

It carries out the reaction L-seryl-[protein] + ATP = 3-O-(5'-adenylyl)-L-seryl-[protein] + diphosphate. The catalysed reaction is L-threonyl-[protein] + ATP = 3-O-(5'-adenylyl)-L-threonyl-[protein] + diphosphate. The enzyme catalyses L-tyrosyl-[protein] + ATP = O-(5'-adenylyl)-L-tyrosyl-[protein] + diphosphate. It catalyses the reaction L-histidyl-[protein] + UTP = N(tele)-(5'-uridylyl)-L-histidyl-[protein] + diphosphate. It carries out the reaction L-seryl-[protein] + UTP = O-(5'-uridylyl)-L-seryl-[protein] + diphosphate. The catalysed reaction is L-tyrosyl-[protein] + UTP = O-(5'-uridylyl)-L-tyrosyl-[protein] + diphosphate. Its function is as follows. Nucleotidyltransferase involved in the post-translational modification of proteins. It can catalyze the addition of adenosine monophosphate (AMP) or uridine monophosphate (UMP) to a protein, resulting in modifications known as AMPylation and UMPylation. The protein is Protein nucleotidyltransferase YdiU of Brevibacillus brevis (strain 47 / JCM 6285 / NBRC 100599).